The chain runs to 62 residues: Photosystem II reaction center protein Z (62 aa).

Helical transmembrane passes span Ala-8 to Ala-28 and Phe-41 to Ile-61.

This sequence belongs to the PsbZ family. PSII is composed of 1 copy each of membrane proteins PsbA, PsbB, PsbC, PsbD, PsbE, PsbF, PsbH, PsbI, PsbJ, PsbK, PsbL, PsbM, PsbT, PsbY, PsbZ, Psb30/Ycf12, at least 3 peripheral proteins of the oxygen-evolving complex and a large number of cofactors. It forms dimeric complexes.

It is found in the plastid. The protein resides in the chloroplast thylakoid membrane. Functionally, may control the interaction of photosystem II (PSII) cores with the light-harvesting antenna, regulates electron flow through the 2 photosystem reaction centers. PSII is a light-driven water plastoquinone oxidoreductase, using light energy to abstract electrons from H(2)O, generating a proton gradient subsequently used for ATP formation. This chain is Photosystem II reaction center protein Z, found in Adiantum capillus-veneris (Maidenhair fern).